A 385-amino-acid polypeptide reads, in one-letter code: MADKENSTPASAARLTRSSAAAGAQAKRSAAAGVADGGAPPAKRKRVALSDLPTLSNAVVVAPRQPHHPVVIKPSSKQPEPAAEAAAPSGGGGGSPVSSASTSTASPSSGWDPQYASDIYTYLRSMEVEARRQSAADYIEAVQVDVTANMRAILVDWLVEVADEYKLVADTLYLAVSYLDRYLSAHPLRRNRLQLLGVGAMLIAAKYEEISPPHVEDFCYITDNTYTRQEVVKMESDILKLLEFEMGNPTIKTFLRRFTRSCQEDKKRSSLLLEFMGSYLAELSLLDYGCLRFLPSVVAASVVFVAKLNIDPYTNPWSKKMQKLTGYKVSELKDCILAIHDLQLRKKCSNLTAIRDKYKQHKFKCVSTLLPPVDIPASYLQDLTE.

Residues 1–110 are disordered; sequence MADKENSTPA…STSTASPSSG (110 aa). 3 stretches are compositionally biased toward low complexity: residues 7-41, 74-88, and 96-110; these read STPA…GAPP, PSSK…AAAP, and PVSS…PSSG.

This sequence belongs to the cyclin family. Cyclin AB subfamily.

This Oryza sativa subsp. japonica (Rice) protein is Cyclin-A3-2 (CYCA3-2).